A 969-amino-acid chain; its full sequence is Translation initiation factor IF-2 (969 aa).

The disordered stretch occupies residues 96 to 377; sequence KRDPAEPVRA…NSRNQHQDRR (282 aa). Composition is skewed to low complexity over residues 105–157, 167–181, and 216–252; these read AEPA…QAEP, AAPA…EPAK, and PSAP…PAAP. Residues 253 to 264 are compositionally biased toward basic and acidic residues; the sequence is DRAREEARRAAE. Positions 357 to 366 are enriched in gly residues; that stretch reads RAGGKGGRGG. The tr-type G domain maps to 470–637; sequence PRAPVVTVMG…NVLLQAEILE (168 aa). A G1 region spans residues 479 to 486; the sequence is GHVDHGKT. 479-486 contacts GTP; the sequence is GHVDHGKT. Positions 504 to 508 are G2; that stretch reads GITQH. A G3 region spans residues 525-528; it reads DTPG. Residues 525–529 and 579–582 each bind GTP; these read DTPGH and NKID. The segment at 579–582 is G4; that stretch reads NKID. The segment at 615–617 is G5; the sequence is SAK.

The protein belongs to the TRAFAC class translation factor GTPase superfamily. Classic translation factor GTPase family. IF-2 subfamily.

The protein localises to the cytoplasm. One of the essential components for the initiation of protein synthesis. Protects formylmethionyl-tRNA from spontaneous hydrolysis and promotes its binding to the 30S ribosomal subunits. Also involved in the hydrolysis of GTP during the formation of the 70S ribosomal complex. This chain is Translation initiation factor IF-2, found in Bordetella parapertussis (strain 12822 / ATCC BAA-587 / NCTC 13253).